A 1378-amino-acid chain; its full sequence is Carboxypeptidase D (1378 aa).

The N-terminal stretch at 1–37 (MASGWDERPPWRLESLRLLPPPPLLLLLLLLRSSAQA) is a signal peptide. The Extracellular portion of the chain corresponds to 38–1297 (AHIKKAEATT…DNRIFGLPRE (1260 aa)). Positions 62–380 (HYYHEAALGE…ESLITLIEKV (319 aa)) constitute a Peptidase M14 1 domain. Zn(2+) is bound by residues His-139 and Glu-142. The Cell attachment site signature appears at 162–164 (RGD). Residues Asn-172 and Asn-217 are each glycosylated (N-linked (GlcNAc...) asparagine). The interval 189–232 (RAREGDCGLGDSGPPGTSGRDNSRGRDLNRSFPDQFSTGEPPSL) is disordered. His-257 contributes to the Zn(2+) binding site. Phosphotyrosine is present on Tyr-265. Ser-270 bears the Phosphoserine mark. The active-site Proton donor/acceptor is the Glu-350. N-linked (GlcNAc...) asparagine glycans are attached at residues Asn-399, Asn-410, Asn-429, and Asn-522. Residues 502–792 (HHHHFPDMEI…RSLIQFMKQV (291 aa)) enclose the Peptidase M14 2 domain. Zn(2+) contacts are provided by His-564 and Glu-567. Asn-626 carries an N-linked (GlcNAc...) asparagine glycan. Residue His-671 participates in Zn(2+) binding. Glu-762 functions as the Proton donor/acceptor in the catalytic mechanism. Asn-811, Asn-855, Asn-867, Asn-879, Asn-953, and Asn-976 each carry an N-linked (GlcNAc...) asparagine glycan. The segment at 875–898 (TDANNESKKGKGHSTSTDDTSDPT) is disordered. Residues 930 to 1209 (RYHSYKDLSE…KSLLSMLVEV (280 aa)) enclose the Peptidase M14 3 domain. A compositionally biased stretch (basic and acidic residues) spans 1039–1048 (RERAQEKDCT). The interval 1039–1068 (RERAQEKDCTSKTGHTNARGRDLDTDFTSN) is disordered. 2 N-linked (GlcNAc...) asparagine glycosylation sites follow: Asn-1068 and Asn-1140. A helical membrane pass occupies residues 1298 to 1318 (LVVTVSGATMSALILTACIIW). S-palmitoyl cysteine attachment occurs at residues Cys-1315, Cys-1319, and Cys-1321. At 1319–1378 (CICSIKSNRHKDGFHRLRQHHDEYEDEIRMMSTGSKKSLLSHEFQDETDTEEETLYSSKH) the chain is on the cytoplasmic side. Residues Ser-1356 and Ser-1359 each carry the phosphoserine modification. The disordered stretch occupies residues 1357 to 1378 (LLSHEFQDETDTEEETLYSSKH). Thr-1366 and Thr-1368 each carry phosphothreonine.

This sequence belongs to the peptidase M14 family. It depends on Zn(2+) as a cofactor. Isoform 1 is widely expressed with highest levels in the hippocampus, spinal cord, atrium, colon, testis and ovaries. Detected in the liver of females but not males. Isoform 2 is not detected in brain or lung.

The protein resides in the cell membrane. It is found in the nucleus. It carries out the reaction Releases C-terminal Arg and Lys from polypeptides.. In Rattus norvegicus (Rat), this protein is Carboxypeptidase D.